The primary structure comprises 467 residues: Argininosuccinate lyase (467 aa).

Belongs to the lyase 1 family. Argininosuccinate lyase subfamily.

It is found in the cytoplasm. It carries out the reaction 2-(N(omega)-L-arginino)succinate = fumarate + L-arginine. It functions in the pathway amino-acid biosynthesis; L-arginine biosynthesis; L-arginine from L-ornithine and carbamoyl phosphate: step 3/3. This chain is Argininosuccinate lyase, found in Methylibium petroleiphilum (strain ATCC BAA-1232 / LMG 22953 / PM1).